The chain runs to 250 residues: tRNA pseudouridine synthase A (250 aa).

The active-site Nucleophile is the Asp-52. Residue Tyr-111 participates in substrate binding.

It belongs to the tRNA pseudouridine synthase TruA family. In terms of assembly, homodimer.

The enzyme catalyses uridine(38/39/40) in tRNA = pseudouridine(38/39/40) in tRNA. In terms of biological role, formation of pseudouridine at positions 38, 39 and 40 in the anticodon stem and loop of transfer RNAs. This is tRNA pseudouridine synthase A from Methylorubrum extorquens (strain PA1) (Methylobacterium extorquens).